We begin with the raw amino-acid sequence, 607 residues long: Serine/threonine-protein kinase sid2 (607 aa).

Phosphoserine is present on residues Ser-56, Ser-60, Ser-65, and Ser-86. Over residues 93-108 (DRSGELSYKDNNHWSD) the composition is skewed to basic and acidic residues. Residues 93–118 (DRSGELSYKDNNHWSDRSSTGSPRWE) are disordered. A compositionally biased stretch (polar residues) spans 109–118 (RSSTGSPRWE). In terms of domain architecture, Protein kinase spans 208-508 (FQTITQVGQG…LKQVMQHPYF (301 aa)). ATP contacts are provided by residues 214–222 (VGQGGYGSV) and Lys-237. Tyr-219 is modified (phosphotyrosine). Residue Asp-331 is the Proton acceptor of the active site. Ser-402 bears the Phosphoserine mark. The AGC-kinase C-terminal domain occupies 509–589 (SKIDWKNVRT…RHQKNSHPTS (81 aa)). Residues 586–607 (HPTSSSSALSSPLSAPSFGTLL) are disordered. The span at 589–607 (SSSSALSSPLSAPSFGTLL) shows a compositional bias: low complexity.

It belongs to the protein kinase superfamily. Ser/Thr protein kinase family. In terms of assembly, interacts with mob1 and cdc11.

It localises to the cytoplasm. Its subcellular location is the cytoskeleton. The protein localises to the microtubule organizing center. The protein resides in the spindle pole body. It carries out the reaction L-seryl-[protein] + ATP = O-phospho-L-seryl-[protein] + ADP + H(+). The enzyme catalyses L-threonyl-[protein] + ATP = O-phospho-L-threonyl-[protein] + ADP + H(+). Its function is as follows. Part of a signaling pathway. Required for initiation of medial ring constriction and septation. The sequence is that of Serine/threonine-protein kinase sid2 (sid2) from Schizosaccharomyces pombe (strain 972 / ATCC 24843) (Fission yeast).